The chain runs to 179 residues: Bifunctional protein PyrR (179 aa).

The PRPP-binding motif lies at 100–112 (VILIDDVLFTGRT).

This sequence belongs to the purine/pyrimidine phosphoribosyltransferase family. PyrR subfamily.

The catalysed reaction is UMP + diphosphate = 5-phospho-alpha-D-ribose 1-diphosphate + uracil. Regulates the transcription of the pyrimidine nucleotide (pyr) operon in response to exogenous pyrimidines. Functionally, also displays a weak uracil phosphoribosyltransferase activity which is not physiologically significant. This Mannheimia succiniciproducens (strain KCTC 0769BP / MBEL55E) protein is Bifunctional protein PyrR.